Consider the following 65-residue polypeptide: Hainantoxin-X.3 (65 aa).

A signal peptide spans 1–20 (MNMKILVLVAVLCLVVSTHA). A propeptide spanning residues 21-37 (ERHSKTDMGDSPMIQER) is cleaved from the precursor. Disulfide bonds link Cys39/Cys56, Cys46/Cys59, and Cys55/Cys64.

This sequence belongs to the neurotoxin 36 family. 02 subfamily. In terms of tissue distribution, expressed by the venom gland.

It is found in the secreted. Its function is as follows. Reversibly blocks N-type calcium channels (Cav2.2/CACNA1B) in rat dorsal root ganglion cells. Elicits no toxic symptoms in either vertebrates or invertebrates during a period of 48 hours post-injection, when it was assayed in vivo by direct injection into mice and cockroaches. The chain is Hainantoxin-X.3 from Cyriopagopus hainanus (Chinese bird spider).